The sequence spans 346 residues: Farnesyl diphosphate synthase 1 (346 aa).

Lysine 52, arginine 55, and glutamine 90 together coordinate isopentenyl diphosphate. Mg(2+)-binding residues include aspartate 97 and aspartate 101. The DDXXD motif signature appears at 97–101 (DDIMD). Arginine 106 lines the dimethylallyl diphosphate pocket. Arginine 107 provides a ligand contact to isopentenyl diphosphate. Lysine 194, threonine 195, and glutamine 233 together coordinate dimethylallyl diphosphate. The short motif at 236-240 (DDYLD) is the DDXXD motif element. Residues lysine 250 and lysine 259 each contribute to the dimethylallyl diphosphate site.

It belongs to the FPP/GGPP synthase family. Mg(2+) is required as a cofactor. Requires Mn(2+) as cofactor. Highly expressed in shoots.

It carries out the reaction isopentenyl diphosphate + (2E)-geranyl diphosphate = (2E,6E)-farnesyl diphosphate + diphosphate. It catalyses the reaction isopentenyl diphosphate + dimethylallyl diphosphate = (2E)-geranyl diphosphate + diphosphate. Its pathway is isoprenoid biosynthesis; farnesyl diphosphate biosynthesis; farnesyl diphosphate from geranyl diphosphate and isopentenyl diphosphate: step 1/1. It functions in the pathway isoprenoid biosynthesis; geranyl diphosphate biosynthesis; geranyl diphosphate from dimethylallyl diphosphate and isopentenyl diphosphate: step 1/1. Catalyzes the sequential condensation of isopentenyl pyrophosphate (IPP) with the allylic pyrophosphates, dimethylallyl pyrophosphate (DMAPP), and then with the resultant geranylpyrophosphate (GPP) to the ultimate product farnesyl pyrophosphate (FPP). Has a 4.5 time greater affinity for GPP versus DMAPP. In Artemisia spiciformis (Spiked big sagebrush), this protein is Farnesyl diphosphate synthase 1 (FDS-1).